Reading from the N-terminus, the 346-residue chain is tRNA N6-adenosine threonylcarbamoyltransferase (346 aa).

A divalent metal cation is bound by residues H120, H124, and Y141. Substrate-binding positions include Y141–G145, D173, G188, E192, and N277. A divalent metal cation is bound at residue D305.

The protein belongs to the KAE1 / TsaD family. In terms of assembly, component of the EKC/KEOPS complex composed of at least BUD32, CGI121, GON7, KAE1 and PCC1; the whole complex dimerizes. A divalent metal cation is required as a cofactor.

The protein localises to the cytoplasm. It is found in the nucleus. The enzyme catalyses L-threonylcarbamoyladenylate + adenosine(37) in tRNA = N(6)-L-threonylcarbamoyladenosine(37) in tRNA + AMP + H(+). Component of the EKC/KEOPS complex that is required for the formation of a threonylcarbamoyl group on adenosine at position 37 (t(6)A37) in tRNAs that read codons beginning with adenine. The complex is probably involved in the transfer of the threonylcarbamoyl moiety of threonylcarbamoyl-AMP (TC-AMP) to the N6 group of A37. KAE1 likely plays a direct catalytic role in this reaction, but requires other protein(s) of the complex to fulfill this activity. The EKC/KEOPS complex also promotes both telomere uncapping and telomere elongation. The complex is required for efficient recruitment of transcriptional coactivators. The protein is tRNA N6-adenosine threonylcarbamoyltransferase of Gibberella zeae (strain ATCC MYA-4620 / CBS 123657 / FGSC 9075 / NRRL 31084 / PH-1) (Wheat head blight fungus).